The chain runs to 589 residues: MRTHFCGLINETLIGHTVTLAGWTDVARNLGGVCFIDLRDHEGIVQITVDSRAIDQNNSELFRVASGLSYEDVLQVEGVVHARHAVNDKIKTGKVEVIATKIKILNKAAPLPFHAHENPGEDIRLKYRYLDLRRPEMQRMQRTRIKLVQALRRHLDMHGFQDIETPILTKATPEGARDFLVPARMHPGEFYALPQSPQLFKQILMVAGFDRYYQIARCFRDEALRADRQLEFTQLDMEFAFVSERDVQDFVEEMIRRVFKEVAGIELDTTFPRMTWKEAMRRFGSDKPDMRINLELIDVAALVADSTFTPFTNAVAHPNGRVAALRIPRGAVLSRKQIDEYAAYTAKYGATGLAYAKLAPTGEITSPIAKFFSEDAFAALLSHIGAEKGDIVFFGAGNYNKVSDFMGALRLKAGKDFALITADWRPLWVTDFPMFEWDEEAQRYVALHHPFTAPAAINDIDELRTHARTALSRGYDMVLNGNEIGGGSIRIHRPEMQRAVFELLGITEDEARAKFGFLLDALNYGAPPHGGIAFGIDRIAALIAGTESIRDVIPFPKTTGAQCLMTDAPSPISEEQLSEIHVITKKLTP.

Glu174 is a binding site for L-aspartate. Residues 198–201 (QLFK) are aspartate. Position 220 (Arg220) interacts with L-aspartate. ATP contacts are provided by residues 220-222 (RDE) and Gln229. L-aspartate is bound at residue His448. Glu483 serves as a coordination point for ATP. Residue Arg490 participates in L-aspartate binding. Residue 535–538 (GIDR) participates in ATP binding.

Belongs to the class-II aminoacyl-tRNA synthetase family. Type 1 subfamily. As to quaternary structure, homodimer.

Its subcellular location is the cytoplasm. The catalysed reaction is tRNA(Asp) + L-aspartate + ATP = L-aspartyl-tRNA(Asp) + AMP + diphosphate. Catalyzes the attachment of L-aspartate to tRNA(Asp) in a two-step reaction: L-aspartate is first activated by ATP to form Asp-AMP and then transferred to the acceptor end of tRNA(Asp). This Xylella fastidiosa (strain M23) protein is Aspartate--tRNA ligase.